Reading from the N-terminus, the 89-residue chain is Small ribosomal subunit protein uS17 (89 aa).

It belongs to the universal ribosomal protein uS17 family. As to quaternary structure, part of the 30S ribosomal subunit.

In terms of biological role, one of the primary rRNA binding proteins, it binds specifically to the 5'-end of 16S ribosomal RNA. The polypeptide is Small ribosomal subunit protein uS17 (Polynucleobacter asymbioticus (strain DSM 18221 / CIP 109841 / QLW-P1DMWA-1) (Polynucleobacter necessarius subsp. asymbioticus)).